A 427-amino-acid chain; its full sequence is Glutamate-1-semialdehyde 2,1-aminomutase (427 aa).

Lys265 bears the N6-(pyridoxal phosphate)lysine mark.

The protein belongs to the class-III pyridoxal-phosphate-dependent aminotransferase family. HemL subfamily. Homodimer. Pyridoxal 5'-phosphate serves as cofactor.

Its subcellular location is the cytoplasm. The catalysed reaction is (S)-4-amino-5-oxopentanoate = 5-aminolevulinate. Its pathway is porphyrin-containing compound metabolism; protoporphyrin-IX biosynthesis; 5-aminolevulinate from L-glutamyl-tRNA(Glu): step 2/2. This chain is Glutamate-1-semialdehyde 2,1-aminomutase, found in Pseudomonas aeruginosa (strain UCBPP-PA14).